Consider the following 250-residue polypeptide: HTH-type transcriptional regulator KipR (250 aa).

Positions 5–65 (NKTVVKSMAL…DASGAYSLGL (61 aa)) constitute an HTH iclR-type domain. Residues 26-45 (LSELVSLTGMPKTSVHRMVS) constitute a DNA-binding region (H-T-H motif). One can recognise an IclR-ED domain in the interval 80–249 (IRKIAKPVME…ALQISRKIGY (170 aa)).

Transcriptional repressor of the kip gene-containing operon. In Bacillus subtilis (strain 168), this protein is HTH-type transcriptional regulator KipR (kipR).